Consider the following 120-residue polypeptide: ATP-dependent Clp protease adapter protein ClpS (120 aa).

The interval 1-27 (MHAPSEIRLTFNQDRPQSNEDDGSGLA) is disordered.

It belongs to the ClpS family. As to quaternary structure, binds to the N-terminal domain of the chaperone ClpA.

In terms of biological role, involved in the modulation of the specificity of the ClpAP-mediated ATP-dependent protein degradation. The chain is ATP-dependent Clp protease adapter protein ClpS from Pseudomonas putida (strain GB-1).